The sequence spans 459 residues: Glycosyl hydrolase family 109 protein 1 (459 aa).

Positions 1–31 form a signal peptide, tat-type signal; the sequence is MHNIHRRHFLKAAGAVTAGLVTANIALNANA. NAD(+) contacts are provided by residues 64 to 65, D86, 135 to 138, 155 to 156, and N184; these read ER, WEWH, and EV. Substrate contacts are provided by residues Y213, R232, 244-247, and Y326; that span reads YPTH. Y244 contacts NAD(+).

Belongs to the Gfo/Idh/MocA family. Glycosyl hydrolase 109 subfamily. It depends on NAD(+) as a cofactor. Predicted to be exported by the Tat system. The position of the signal peptide cleavage has not been experimentally proven.

Glycosidase. In Shewanella sp. (strain ANA-3), this protein is Glycosyl hydrolase family 109 protein 1.